Here is a 116-residue protein sequence, read N- to C-terminus: Aspartate 1-decarboxylase (116 aa).

Ser25 functions as the Schiff-base intermediate with substrate; via pyruvic acid in the catalytic mechanism. Ser25 bears the Pyruvic acid (Ser) mark. Residue Thr57 participates in substrate binding. Tyr58 (proton donor) is an active-site residue. Residue Gly73 to Ala75 coordinates substrate.

It belongs to the PanD family. In terms of assembly, heterooctamer of four alpha and four beta subunits. The cofactor is pyruvate. Is synthesized initially as an inactive proenzyme, which is activated by self-cleavage at a specific serine bond to produce a beta-subunit with a hydroxyl group at its C-terminus and an alpha-subunit with a pyruvoyl group at its N-terminus.

Its subcellular location is the cytoplasm. The catalysed reaction is L-aspartate + H(+) = beta-alanine + CO2. It participates in cofactor biosynthesis; (R)-pantothenate biosynthesis; beta-alanine from L-aspartate: step 1/1. Its function is as follows. Catalyzes the pyruvoyl-dependent decarboxylation of aspartate to produce beta-alanine. In Christiangramia forsetii (strain DSM 17595 / CGMCC 1.15422 / KT0803) (Gramella forsetii), this protein is Aspartate 1-decarboxylase.